Here is a 672-residue protein sequence, read N- to C-terminus: Transcriptional activator of sulfur metabolism MET4 (672 aa).

Positions 1–10 are enriched in basic and acidic residues; it reads MKQEQSHEGD. The disordered stretch occupies residues 1 to 44; that stretch reads MKQEQSHEGDSYSTEFINLFGKDTATHPSSNNGANNNGMGSTNS. The span at 29-44 shows a compositional bias: low complexity; it reads SSNNGANNNGMGSTNS. Short sequence motifs (9aaTAD) lie at residues 89-97, 102-110, and 109-117; these read ILLEQLAYV, PSLDNEFSN, and SNVDWNVNT. Residues 95–144 form a transcriptional activation region; sequence AYVDNFIPSLDNEFSNVDWNVNTTHNNANNNGADTFSSINANPFDLDEQL. Disordered stretches follow at residues 157–265 and 299–347; these read IFPD…NMTS and TTHT…NITV. Residues 165–174 are compositionally biased toward low complexity; sequence SNNNNNSNNG. Over residues 175–188 the composition is skewed to basic and acidic residues; that stretch reads NDDHSNHDVLHEDP. Positions 188–235 are inhibitory region; AdoMet responsiveness; required for interaction with MET30; that stretch reads PSTNNRQRNPHFLTQRRNTFLTSQYDQSKSRFSSKNKRNGNNGETNNF. Polar residues predominate over residues 202–214; sequence QRRNTFLTSQYDQ. Low complexity predominate over residues 226-238; that stretch reads NGNNGETNNFGDN. Polar residues-rich tracts occupy residues 251 to 265 and 301 to 321; these read GSPS…NMTS and HTPN…SSSQ. The interval 312 to 375 is auxiliary; required for high transcriptional activity under nonrepressive growth conditions; that stretch reads VTSAQNSSSQ…NVPNGAYNSL (64 aa). Residues 375 to 403 are required for interaction with MET31 and MET32; the sequence is LISAGFDNDQIDAIAAIMAYHHQKKIREN. Ser416 carries the post-translational modification Phosphoserine. The segment at 475-574 is disordered; it reads PKSNNIHNQR…DNEDDEYDDA (100 aa). Residues 477–486 show a composition bias toward polar residues; the sequence is SNNIHNQRQP. The span at 487 to 498 shows a compositional bias: basic and acidic residues; that stretch reads SRNDHKISRESD. Residues 499 to 512 are compositionally biased toward low complexity; sequence GNNGNDNVHHNNAV. Composition is skewed to basic and acidic residues over residues 519 to 528 and 537 to 565; these read RGDEIAKIRS and SDHK…KYSD. Ser564 carries the post-translational modification Phosphoserine. The region spanning 586 to 649 is the bZIP domain; that stretch reads KKELGDDDED…KLLKNLVLSS (64 aa). Positions 601 to 612 are basic motif; that stretch reads KKSHQKKKLKEK. Residues 609–648 adopt a coiled-coil conformation; that stretch reads LKEKELESSIHELTEIAASLQKRIHTLETENKLLKNLVLS. The leucine-zipper stretch occupies residues 614-642; the sequence is LESSIHELTEIAASLQKRIHTLETENKLL.

Belongs to the bZIP family. As to quaternary structure, interacts with MET30. Tethered to DNA through two alternate complexes associating MET4 with MET28 and either MET31 or MET32. Interacts with MET28 and CBF1 through its leucine zipper to form a heteromeric complex.

Its subcellular location is the nucleus. In terms of biological role, positive trans-acting factor capable of stimulating the transcription of the MET genes from the methionine biosynthetic pathway. MET4, MET28 and CBF1 are required for full induction of MET25 and MET16 gene transcription. MET4 controls as well the derepression of MET6. Required for the transcription of genes necessary for sulfur amino acid biosynthesis. Involved in the transcription activation of MET28 and MET30. Required for MET3 gene expression via assembly of the MET4-MET28-MET31 and MET4-MET28-MET32 complexes. Involved in response to cadmium and arsenic. Cadmium-activated MET4 also induces glutathione biosynthesis. The protein is Transcriptional activator of sulfur metabolism MET4 (MET4) of Saccharomyces cerevisiae (strain ATCC 204508 / S288c) (Baker's yeast).